The chain runs to 580 residues: Amino-acid acetyltransferase, mitochondrial (580 aa).

Residues 403–560 (LTMQNLFDDK…KLRHQNGVVD (158 aa)) form the N-acetyltransferase domain.

It belongs to the acetyltransferase family.

The protein resides in the mitochondrion. The catalysed reaction is L-glutamate + acetyl-CoA = N-acetyl-L-glutamate + CoA + H(+). The protein operates within amino-acid biosynthesis; L-arginine biosynthesis; N(2)-acetyl-L-ornithine from L-glutamate: step 1/4. In terms of biological role, N-acetylglutamate synthase involved in arginine biosynthesis. This chain is Amino-acid acetyltransferase, mitochondrial (ARG2), found in Candida albicans (strain SC5314 / ATCC MYA-2876) (Yeast).